A 393-amino-acid polypeptide reads, in one-letter code: Prokineticin receptor 1 (393 aa).

The Extracellular portion of the chain corresponds to 1–63; it reads MEITMGVMDE…NSRTFFAAKI (63 aa). Asparagine 11, asparagine 14, and asparagine 36 each carry an N-linked (GlcNAc...) asparagine glycan. Residues 64–84 traverse the membrane as a helical segment; it reads VIGMALVGIMLVCGIGNFIFI. The Cytoplasmic segment spans residues 85 to 98; the sequence is AALARYKKLRNLTN. Residues 99–119 traverse the membrane as a helical segment; the sequence is LLIANLAISDFLVAIVCCPFE. Topologically, residues 120 to 145 are extracellular; it reads MDYYVVRQLSWEHGHVLCASVNYLRT. A disulfide bond links cysteine 137 and cysteine 217. The chain crosses the membrane as a helical span at residues 146–166; it reads VSLYVSTNALLAIAIDRYLAI. Residues 167 to 179 are Cytoplasmic-facing; that stretch reads VHPLRPRMKYQTA. The chain crosses the membrane as a helical span at residues 180 to 200; the sequence is TGLIALVWVVSILVAIPSAYF. The Extracellular portion of the chain corresponds to 201 to 232; sequence TTETVLVIVKSQEKIFCGQIWPVDQQIYYKSY. Residues 233-253 form a helical membrane-spanning segment; that stretch reads FLFIFGIEFVGPVVTMTLCYA. Topologically, residues 254–282 are cytoplasmic; that stretch reads RISRELWFKAVPGFQTEQIRKRLRCRRKT. The helical transmembrane segment at 283-303 threads the bilayer; the sequence is VLVLMCILTAYVLCWAPFYGF. Topologically, residues 304 to 322 are extracellular; sequence AIVRDFFPTVFVKEKHYLT. A helical transmembrane segment spans residues 323 to 343; it reads AFYVVECIAMSNSMINTVCFV. Topologically, residues 344 to 393 are cytoplasmic; sequence TVKNNTIKYFKKIMLLHWKASYNGSKSSGDLDLKTTGVPATEEVDCIGLK.

It belongs to the G-protein coupled receptor 1 family.

It localises to the cell membrane. Its function is as follows. Receptor for prokineticin 1. Exclusively coupled to the G(q) subclass of heteromeric G proteins. Activation leads to mobilization of calcium, stimulation of phosphoinositide turnover and activation of p44/p42 mitogen-activated protein kinase. May play a role during early pregnancy. This chain is Prokineticin receptor 1 (PROKR1), found in Bos taurus (Bovine).